The sequence spans 246 residues: Pyridoxine 5'-phosphate synthase (246 aa).

Asn-12 is a binding site for 3-amino-2-oxopropyl phosphate. 1-deoxy-D-xylulose 5-phosphate is bound at residue 14–15; it reads DH. Arg-23 is a binding site for 3-amino-2-oxopropyl phosphate. His-48 acts as the Proton acceptor in catalysis. 1-deoxy-D-xylulose 5-phosphate-binding residues include Arg-50 and His-55. The active-site Proton acceptor is the Glu-75. Residue Thr-105 participates in 1-deoxy-D-xylulose 5-phosphate binding. His-196 functions as the Proton donor in the catalytic mechanism. 3-amino-2-oxopropyl phosphate-binding positions include Gly-197 and 218–219; that span reads GH.

It belongs to the PNP synthase family. As to quaternary structure, homooctamer; tetramer of dimers.

The protein localises to the cytoplasm. The enzyme catalyses 3-amino-2-oxopropyl phosphate + 1-deoxy-D-xylulose 5-phosphate = pyridoxine 5'-phosphate + phosphate + 2 H2O + H(+). The protein operates within cofactor biosynthesis; pyridoxine 5'-phosphate biosynthesis; pyridoxine 5'-phosphate from D-erythrose 4-phosphate: step 5/5. Functionally, catalyzes the complicated ring closure reaction between the two acyclic compounds 1-deoxy-D-xylulose-5-phosphate (DXP) and 3-amino-2-oxopropyl phosphate (1-amino-acetone-3-phosphate or AAP) to form pyridoxine 5'-phosphate (PNP) and inorganic phosphate. The sequence is that of Pyridoxine 5'-phosphate synthase from Pseudomonas syringae pv. tomato (strain ATCC BAA-871 / DC3000).